We begin with the raw amino-acid sequence, 348 residues long: Rhodopsin (348 aa).

At methionine 1 the chain carries N-acetylmethionine. Residues methionine 1–glutamine 36 are Extracellular-facing. Asparagine 2 and asparagine 15 each carry an N-linked (GlcNAc...) asparagine glycan. A helical transmembrane segment spans residues phenylalanine 37–valine 61. The Cytoplasmic segment spans residues threonine 62 to asparagine 73. The chain crosses the membrane as a helical span at residues tyrosine 74–tyrosine 96. Topologically, residues threonine 97–cysteine 110 are extracellular. Cysteines 110 and 187 form a disulfide. A helical membrane pass occupies residues asparagine 111–isoleucine 133. Residues glutamate 134 to tyrosine 136 carry the 'Ionic lock' involved in activated form stabilization motif. Topologically, residues glutamate 134–histidine 152 are cytoplasmic. A helical transmembrane segment spans residues alanine 153–valine 173. The Extracellular portion of the chain corresponds to glycine 174–serine 202. Glutamate 201 serves as a coordination point for Zn(2+). Residues phenylalanine 203–glycine 224 form a helical membrane-spanning segment. Residues glutamine 225–arginine 252 are Cytoplasmic-facing. Residues methionine 253–tyrosine 274 form a helical membrane-spanning segment. The Extracellular segment spans residues isoleucine 275–isoleucine 286. A Zn(2+)-binding site is contributed by glutamine 279. The chain crosses the membrane as a helical span at residues leucine 287–methionine 308. Lysine 296 is subject to N6-(retinylidene)lysine. The Cytoplasmic portion of the chain corresponds to methionine 309–alanine 348. 2 S-palmitoyl cysteine lipidation sites follow: cysteine 322 and cysteine 323. The interval glutamate 330–alanine 348 is interaction with SAG. Serine 334 is modified (phosphoserine). Phosphothreonine occurs at positions 335 and 336. Phosphoserine is present on serine 338. 2 positions are modified to phosphothreonine: threonine 340 and threonine 342. A Phosphoserine modification is found at serine 343.

The protein belongs to the G-protein coupled receptor 1 family. Opsin subfamily. Homodimer. May form a complex composed of RHO, GRK1 and RCVRN in a Ca(2+)-dependent manner; RCVRN prevents the interaction between GRK1 and RHO. Interacts with GRK1. Interacts (phosphorylated form) with SAG. Interacts with GNAT1. Interacts with GNAT3. SAG and G-proteins compete for a common binding site. Interacts with PRCD; the interaction promotes PRCD stability. Forms a complex with ASAP1 and ARF4. Forms a complex with ASAP1, RAB11A, Rabin8/RAB3IP, ARF4 and RAB11FIP3; the complex regulates Golgi-to-cilia rhodopsin/RHO transport in photoreceptors. Phosphorylated on some or all of the serine and threonine residues present in the C-terminal region. Post-translationally, contains one covalently linked retinal chromophore. Upon light absorption, the covalently bound 11-cis-retinal is converted to all-trans-retinal. After hydrolysis of the Schiff base and release of the covalently bound all-trans-retinal, active rhodopsin is regenerated by binding of a fresh molecule of 11-cis-retinal.

Its subcellular location is the membrane. It is found in the cell projection. The protein localises to the cilium. It localises to the photoreceptor outer segment. Functionally, photoreceptor required for image-forming vision at low light intensity. Required for photoreceptor cell viability after birth. Light-induced isomerization of 11-cis to all-trans retinal triggers a conformational change that activates signaling via G-proteins. Subsequent receptor phosphorylation mediates displacement of the bound G-protein alpha subunit by the arrestin SAG and terminates signaling. The chain is Rhodopsin (RHO) from Loxodonta africana (African elephant).